We begin with the raw amino-acid sequence, 498 residues long: Signal recognition particle receptor FtsY (498 aa).

2 disordered regions span residues 1-130 and 147-200; these read MGLF…PNQS and KVES…YNRS. Residues 36 to 46 show a composition bias toward low complexity; sequence ALLAETAETAE. Residues 103-120 are compositionally biased toward polar residues; that stretch reads SENSVAAVQNNTETMPSQ. Residues 301 to 308, 383 to 387, and 447 to 450 each bind GTP; these read GVNGVGKT, DTAGR, and TKID.

The protein belongs to the GTP-binding SRP family. FtsY subfamily. As to quaternary structure, part of the signal recognition particle protein translocation system, which is composed of SRP and FtsY.

It is found in the cell membrane. The protein localises to the cytoplasm. The catalysed reaction is GTP + H2O = GDP + phosphate + H(+). Functionally, involved in targeting and insertion of nascent membrane proteins into the cytoplasmic membrane. Acts as a receptor for the complex formed by the signal recognition particle (SRP) and the ribosome-nascent chain (RNC). The sequence is that of Signal recognition particle receptor FtsY from Streptococcus mutans serotype c (strain ATCC 700610 / UA159).